A 277-amino-acid chain; its full sequence is Protein OPG166 (277 aa).

Asn-29 and Asn-58 each carry an N-linked (GlcNAc...) asparagine; by host glycan. 5 helical membrane passes run 124–144 (TMLM…EITY), 156–176 (GILQ…AFLF), 186–206 (IIGL…KVFS), 219–239 (LIIY…GLSL), and 247–267 (LLLS…LFLV).

The protein belongs to the orthopoxvirus OPG166 protein family.

It is found in the host membrane. In terms of biological role, promotes, when overexpressed, the influx of extracellular Ca(2+), leading to membrane permeability and host cell necrosis. The chain is Protein OPG166 (OPG166) from Bos taurus (Bovine).